Reading from the N-terminus, the 413-residue chain is Extracellular sucrase (413 aa).

Aspartate 44 serves as the catalytic Nucleophile. Glutamate 276 serves as the catalytic Proton donor/acceptor.

Belongs to the glycosyl hydrolase 68 family.

It localises to the secreted. The enzyme catalyses Hydrolysis of terminal non-reducing beta-D-fructofuranoside residues in beta-D-fructofuranosides.. The polypeptide is Extracellular sucrase (sacC) (Zymomonas mobilis subsp. mobilis (strain ATCC 10988 / DSM 424 / LMG 404 / NCIMB 8938 / NRRL B-806 / ZM1)).